A 718-amino-acid polypeptide reads, in one-letter code: Protein spire homolog 2 (718 aa).

2 disordered regions span residues 1-22 (MARAGGGGAAAPERAGGAARPE) and 143-166 (DSSCGAADEGYVGPEEEEEAEGGP). Residues 10–21 (AAPERAGGAARP) are compositionally biased toward low complexity. The KIND domain occupies 26 to 207 (LSLEEVLKVY…RALFVETLEL (182 aa)). 3 WH2 domains span residues 251 to 265 (QLMRELRHGVKLKKV), 281 to 299 (PFEMLMQDIRARNYKLRKV), and 345 to 362 (LHEKILEEIKQERRLRPV). Ser-374 bears the Phosphoserine mark. Positions 397-434 (TDTGSGSQRPRPRVLLKAPTLAEMEEMNTSEEEESPCG) are disordered. Residues 419–432 (EMEEMNTSEEEESP) show a composition bias toward acidic residues. Phosphoserine is present on residues Ser-443, Ser-445, and Ser-479. Residues 456–518 (MASGLQSAAQ…SSLSSVDGPE (63 aa)) are disordered. Positions 496–513 (SGQSQPLPSSALPSSLSS) are enriched in low complexity. The interval 538–558 (LALTVEEVVDVRRVLVKAEME) is spir-box.

Belongs to the spire family. Detected in oocytes.

It localises to the cytoplasm. The protein localises to the cytoskeleton. It is found in the cytosol. Its subcellular location is the cell membrane. The protein resides in the cytoplasmic vesicle membrane. Acts as an actin nucleation factor, remains associated with the slow-growing pointed end of the new filament. Involved in intracellular vesicle transport along actin fibers, providing a novel link between actin cytoskeleton dynamics and intracellular transport. Required for asymmetric spindle positioning and asymmetric cell division during oocyte meiosis. Required for normal formation of the cleavage furrow and for polar body extrusion during female germ cell meiosis. Also acts in the nucleus: together with SPIRE1 and SPIRE2, promotes assembly of nuclear actin filaments in response to DNA damage in order to facilitate movement of chromatin and repair factors after DNA damage. The chain is Protein spire homolog 2 (Spire2) from Mus musculus (Mouse).